The chain runs to 408 residues: S-adenosylmethionine synthase (408 aa).

142–147 is a binding site for ATP; sequence GEGSGD.

Belongs to the AdoMet synthase 2 family. Mg(2+) is required as a cofactor.

It catalyses the reaction L-methionine + ATP + H2O = S-adenosyl-L-methionine + phosphate + diphosphate. It functions in the pathway amino-acid biosynthesis; S-adenosyl-L-methionine biosynthesis; S-adenosyl-L-methionine from L-methionine: step 1/1. In terms of biological role, catalyzes the formation of S-adenosylmethionine from methionine and ATP. The polypeptide is S-adenosylmethionine synthase (Halobacterium salinarum (strain ATCC 29341 / DSM 671 / R1)).